Here is a 630-residue protein sequence, read N- to C-terminus: Sodium-dependent serotonin transporter (630 aa).

At 1 to 87 the chain is on the cytoplasmic side; sequence METTPLNSQK…ERETWGKKMD (87 aa). Residues 23 to 60 are disordered; sequence ENGVLQKGVPTTADRAEPSQISNGYSAVPSTSAGDEAS. Residues 41 to 55 are compositionally biased toward polar residues; the sequence is SQISNGYSAVPSTSA. Y47 carries the phosphotyrosine modification. Residues 88-112 traverse the membrane as a helical segment; the sequence is FLLSVIGYAVDLGNIWRFPYICYQN. 5 residues coordinate Na(+): G94, A96, V97, D98, and N101. Position 98 (D98) interacts with serotonin. The Extracellular segment spans residues 113–115; it reads GGG. The chain crosses the membrane as a helical span at residues 116–135; the sequence is AFLLPYTIMAIFGGIPLFYM. At 136–160 the chain is on the cytoplasmic side; that stretch reads ELALGQYHRNGCISIWRKICPIFKG. Residue Y142 is modified to Phosphotyrosine. Residues 161-186 traverse the membrane as a helical segment; it reads IGYAICIIAFYIASYYNTIIAWALYY. Over 187 to 252 the chain is Extracellular; that stretch reads LISSLTDRLP…KGLQDLGTIS (66 aa). Cysteines 200 and 209 form a disulfide. N-linked (GlcNAc...) asparagine glycans are attached at residues N208 and N217. A helical membrane pass occupies residues 253 to 271; sequence WQLTLCIVLIFTVIYFSIW. Over 272 to 277 the chain is Cytoplasmic; the sequence is KGVKTS. T276 is subject to Phosphothreonine. Residues 278–297 form a helical membrane-spanning segment; that stretch reads GKVVWVTATFPYIVLSVLLV. Topologically, residues 298-324 are extracellular; it reads RGATLPGAWRGVVFYLKPNWQKLLETG. A helical transmembrane segment spans residues 325–347; sequence VWVDAAAQIFFSLGPGFGVLLAF. S336 contributes to the Na(+) binding site. Over 348–360 the chain is Cytoplasmic; it reads ASYNKFNNNCYQD. A helical membrane pass occupies residues 361-380; the sequence is ALVTSVVNCMTSFVSGFVIF. Residue N368 coordinates Na(+). The Extracellular segment spans residues 381–421; sequence TVLGYMAEMRNEDVSEVAKDAGPSLLFITYAEAIANMPAST. Residues 422 to 443 traverse the membrane as a helical segment; it reads FFAIIFFLMLITLGLDSTFAGL. 3 residues coordinate Na(+): L434, D437, and S438. T439 lines the serotonin pocket. The Cytoplasmic portion of the chain corresponds to 444–463; the sequence is EGVITAVLDEFPHIWAKRRE. The helical transmembrane segment at 464–483 threads the bilayer; it reads WFVLIVVITCVLGSLLTLTS. Over 484-494 the chain is Extracellular; it reads GGAYVVTLLEE. Serotonin-binding residues include E494 and Y495. A helical membrane pass occupies residues 495–516; it reads YATGPAVLTVALIEAVAVSWFY. The Cytoplasmic portion of the chain corresponds to 517–538; the sequence is GITQFCSDVKEMLGFSPGWFWR. The helical transmembrane segment at 539–558 threads the bilayer; it reads ICWVAISPLFLLFIICSFLM. The serotonin site is built by F556 and S559. Topologically, residues 559-574 are extracellular; that stretch reads SPPQLRLFQYNYPHWS. Residues 575 to 595 traverse the membrane as a helical segment; sequence IVLGYCIGMSSVICIPTYIIY. Residues 596–630 lie on the Cytoplasmic side of the membrane; the sequence is RLISTPGTLKERIIKSITPETPTEIPCGDIRMNAV. The segment at 616–624 is interaction with RAB4A; that stretch reads TPTEIPCGD.

Belongs to the sodium:neurotransmitter symporter (SNF) (TC 2.A.22) family. SLC6A4 subfamily. As to quaternary structure, monomer or homooligomer. Interacts with TGFB1I1. Interacts with SEC23A, SEC24C and PATJ. Interacts with NOS1; the interaction may diminish the cell surface localization of SERT in the brain and, correspondingly, reduce serotonin reuptake. Interacts (via C-terminus) with SCAMP2; the interaction is direct and retains transporter molecules intracellularly. Interacts with filamentous actin and STX1A. Interacts (via the N-terminus) with STX1A (via the H3 domain); this interaction regulates SLC4A6 channel conductance. Interacts with ITGAV:ITGB3. Interacts (via C-terminus) with ITGB3; this interaction regulates SLC6A4 trafficking. Post-translationally, phosphorylation at Thr-276 increases 5-HT uptake and is required for cGMP-mediated SERT regulation. In terms of tissue distribution, expressed in the intestinal crypt epithelial cells and myenteric neurons of the small intestine (at protein level). Expressed in the brain.

It localises to the cell membrane. The protein resides in the endomembrane system. Its subcellular location is the endosome membrane. It is found in the synapse. The protein localises to the cell junction. It localises to the focal adhesion. The protein resides in the cell projection. Its subcellular location is the neuron projection. It carries out the reaction serotonin(out) + K(+)(in) + Na(+)(out) + H(+)(in) = serotonin(in) + K(+)(out) + Na(+)(in) + H(+)(out). Its function is as follows. Serotonin transporter that cotransports serotonin with one Na(+) ion in exchange for one K(+) ion and possibly one proton in an overall electroneutral transport cycle. Transports serotonin across the plasma membrane from the extracellular compartment to the cytosol thus limiting serotonin intercellular signaling. Essential for serotonin homeostasis in the central nervous system. In the developing somatosensory cortex, acts in glutamatergic neurons to control serotonin uptake and its trophic functions accounting for proper spatial organization of cortical neurons and elaboration of sensory circuits. In the mature cortex, acts primarily in brainstem raphe neurons to mediate serotonin uptake from the synaptic cleft back into the pre-synaptic terminal thus terminating serotonin signaling at the synapse. Modulates mucosal serotonin levels in the gastrointestinal tract through uptake and clearance of serotonin in enterocytes. Required for enteric neurogenesis and gastrointestinal reflexes. Regulates blood serotonin levels by ensuring rapid high affinity uptake of serotonin from plasma to platelets, where it is further stored in dense granules via vesicular monoamine transporters and then released upon stimulation. Mechanistically, the transport cycle starts with an outward-open conformation having Na1(+) and Cl(-) sites occupied. The binding of a second extracellular Na2(+) ion and serotonin substrate leads to structural changes to outward-occluded to inward-occluded to inward-open, where the Na2(+) ion and serotonin are released into the cytosol. Binding of intracellular K(+) ion induces conformational transitions to inward-occluded to outward-open and completes the cycle by releasing K(+) possibly together with a proton bound to Asp-98 into the extracellular compartment. Na1(+) and Cl(-) ions remain bound throughout the transport cycle. Additionally, displays serotonin-induced channel-like conductance for monovalent cations, mainly Na(+) ions. The channel activity is uncoupled from the transport cycle and may contribute to the membrane resting potential or excitability. This Rattus norvegicus (Rat) protein is Sodium-dependent serotonin transporter (Slc6a4).